Here is a 78-residue protein sequence, read N- to C-terminus: Probable [Fe-S]-dependent transcriptional repressor (78 aa).

4 residues coordinate iron-sulfur cluster: Cys-56, Cys-61, Cys-64, and Cys-70.

This sequence belongs to the FeoC family.

May function as a transcriptional regulator that controls feoABC expression. In Escherichia coli O7:K1 (strain IAI39 / ExPEC), this protein is Probable [Fe-S]-dependent transcriptional repressor.